We begin with the raw amino-acid sequence, 351 residues long: MFYLLGLRLLKYITFRMAYATIFAFLLSLIVGPYIILKLKKLRADQILREDGPKRHLSEKAGIPTMGGILIFFCVFISLVFWSNILNVYFLIMVFVMLGFAFLGFIDDFLKIKKKTSDGLKARFKIYGQIIFSFFSVGILYYFGGEHVSVIYFPFIKSFQIDLGLFYIPFGMFILISASNSFNLTDGLDGLAIGLSIVITGALIIIAYLTSRADFAAYLHIPNIKGSEELVIFLGALLGGSFGFLWFNAYPAKIMMGDTGSLALGAILGMAALILKSEILFSILAGVFIIETMSVIIQVLVYKKTKKRVFKMAPLHHHFEELGWSEMQVVIRFWIIGLIFAIIALSTIKIR.

A run of 10 helical transmembrane segments spans residues 17-37 (MAYATIFAFLLSLIVGPYIIL), 62-82 (GIPTMGGILIFFCVFISLVFW), 85-105 (ILNVYFLIMVFVMLGFAFLGF), 130-150 (IIFSFFSVGILYYFGGEHVSV), 158-178 (SFQIDLGLFYIPFGMFILISA), 190-210 (GLAIGLSIVITGALIIIAYLT), 230-250 (LVIFLGALLGGSFGFLWFNAY), 254-274 (IMMGDTGSLALGAILGMAALI), 279-299 (ILFSILAGVFIIETMSVIIQV), and 328-348 (QVVIRFWIIGLIFAIIALSTI).

It belongs to the glycosyltransferase 4 family. MraY subfamily. Requires Mg(2+) as cofactor.

It localises to the cell inner membrane. The catalysed reaction is UDP-N-acetyl-alpha-D-muramoyl-L-alanyl-gamma-D-glutamyl-meso-2,6-diaminopimeloyl-D-alanyl-D-alanine + di-trans,octa-cis-undecaprenyl phosphate = di-trans,octa-cis-undecaprenyl diphospho-N-acetyl-alpha-D-muramoyl-L-alanyl-D-glutamyl-meso-2,6-diaminopimeloyl-D-alanyl-D-alanine + UMP. It functions in the pathway cell wall biogenesis; peptidoglycan biosynthesis. Its function is as follows. Catalyzes the initial step of the lipid cycle reactions in the biosynthesis of the cell wall peptidoglycan: transfers peptidoglycan precursor phospho-MurNAc-pentapeptide from UDP-MurNAc-pentapeptide onto the lipid carrier undecaprenyl phosphate, yielding undecaprenyl-pyrophosphoryl-MurNAc-pentapeptide, known as lipid I. This is Phospho-N-acetylmuramoyl-pentapeptide-transferase from Borreliella burgdorferi (strain ATCC 35210 / DSM 4680 / CIP 102532 / B31) (Borrelia burgdorferi).